The primary structure comprises 301 residues: MKLQFLGTGSGMPSKQRNVSGLALDLSNVTWLIDCGEGTQHQMLYTKIKPRKVTAVWVTHLHGDHVFGLPGFLSTRSALDGTAPLTVYGPKGLKKWLEATLRVTGSHLGYELTVTEYSDGDTFIQDDHLVTVRKLEHRFPSFGFRIDGPEKPGMLRVDLVRELGVPSGPIYRTIKESDRFEFEGKWYDSKEYVTEPIPGKIVAILGDTIPCENARKLADGADLLVHEATFMEAEQALARKYGHSTTREATALANACAVGKLIVTHISARYVGREEEFVQEVVSDFPSSLVATDFLEYTVGD.

Zn(2+) contacts are provided by histidine 60, histidine 62, aspartate 64, histidine 65, histidine 137, aspartate 207, and histidine 265. Aspartate 64 functions as the Proton acceptor in the catalytic mechanism.

The protein belongs to the RNase Z family. As to quaternary structure, homodimer. The cofactor is Zn(2+).

It catalyses the reaction Endonucleolytic cleavage of RNA, removing extra 3' nucleotides from tRNA precursor, generating 3' termini of tRNAs. A 3'-hydroxy group is left at the tRNA terminus and a 5'-phosphoryl group is left at the trailer molecule.. Its function is as follows. Zinc phosphodiesterase, which displays some tRNA 3'-processing endonuclease activity. Probably involved in tRNA maturation, by removing a 3'-trailer from precursor tRNA. This chain is Ribonuclease Z, found in Exiguobacterium sp. (strain ATCC BAA-1283 / AT1b).